The following is a 694-amino-acid chain: Maintenance of telomere capping protein 4 (694 aa).

Over residues 1 to 12 (MTHTNEHDHKAE) the composition is skewed to basic and acidic residues. Positions 1-26 (MTHTNEHDHKAEQQQNGRGDTTTETV) are disordered. Residues 13–26 (QQQNGRGDTTTETV) are compositionally biased toward polar residues. The residue at position 85 (Ser85) is a Phosphoserine. Over residues 211-222 (YSPSNESSGSSS) the composition is skewed to low complexity. Disordered stretches follow at residues 211-287 (YSPS…PEAQ), 325-437 (AKGS…TETY), and 465-511 (KTSN…PVGL). Over residues 223 to 243 (SRRHHGHHIHPRRHLQHHSRV) the composition is skewed to basic residues. Positions 244–257 (RTANSVHSNTQSLT) are enriched in polar residues. Position 263 is a phosphothreonine (Thr263). Positions 276 to 287 (MITKIATTPEAQ) are enriched in polar residues. Over residues 403 to 417 (SNGGTSRRSSNNGES) the composition is skewed to low complexity. A compositionally biased stretch (polar residues) spans 418 to 437 (ISTNSSKSSMGITFGNTETY). Residues 471-485 (LRAEGEQALESDKEL) are compositionally biased toward basic and acidic residues. A phosphoserine mark is found at Ser481 and Ser491. Tyr493 is subject to Phosphotyrosine. The helical transmembrane segment at 655–675 (RLLEFGIVLVLWTIWFLFSVL) threads the bilayer.

The protein resides in the membrane. It localises to the cytoplasm. The chain is Maintenance of telomere capping protein 4 (MTC4) from Saccharomyces cerevisiae (strain ATCC 204508 / S288c) (Baker's yeast).